Consider the following 193-residue polypeptide: Putative RING finger protein ORF38 (193 aa).

The RING-type zinc-finger motif lies at 12-50 (CCICLDDEDVDRDNTIPCRHTVCRTCYVKPMLDQCPVCR).

The chain is Putative RING finger protein ORF38 from Magallana gigas (Pacific oyster).